An 80-amino-acid polypeptide reads, in one-letter code: Acyl carrier protein (80 aa).

The Carrier domain occupies 2-77 (SDTLKRLQKI…DALNYIENKI (76 aa)). Position 37 is an O-(pantetheine 4'-phosphoryl)serine (Ser37).

It belongs to the acyl carrier protein (ACP) family. In terms of processing, 4'-phosphopantetheine is transferred from CoA to a specific serine of apo-ACP by AcpS. This modification is essential for activity because fatty acids are bound in thioester linkage to the sulfhydryl of the prosthetic group.

It localises to the plastid. Its subcellular location is the chloroplast. The protein operates within lipid metabolism; fatty acid biosynthesis. Carrier of the growing fatty acid chain in fatty acid biosynthesis. The protein is Acyl carrier protein of Cylindrotheca sp. (strain N1) (Marine diatom).